The chain runs to 364 residues: Aminomethyltransferase (364 aa).

It belongs to the GcvT family. As to quaternary structure, the glycine cleavage system is composed of four proteins: P, T, L and H.

The enzyme catalyses N(6)-[(R)-S(8)-aminomethyldihydrolipoyl]-L-lysyl-[protein] + (6S)-5,6,7,8-tetrahydrofolate = N(6)-[(R)-dihydrolipoyl]-L-lysyl-[protein] + (6R)-5,10-methylene-5,6,7,8-tetrahydrofolate + NH4(+). Its function is as follows. The glycine cleavage system catalyzes the degradation of glycine. The chain is Aminomethyltransferase from Geobacillus kaustophilus (strain HTA426).